Reading from the N-terminus, the 300-residue chain is Ribosome-inactivating protein 3 (300 aa).

The active site involves Glu207.

It belongs to the ribosome-inactivating protein family. Type 1 RIP subfamily. In terms of assembly, monomer. As to expression, accumulates to high levels in seeds.

It localises to the cytoplasm. The enzyme catalyses Endohydrolysis of the N-glycosidic bond at one specific adenosine on the 28S rRNA.. In terms of biological role, possesses features of some constitutive defense agent. The coordinate Opaque-2-controlled synthesis of this protein and the major seed storage proteins (zeins) may provide the germinating seedling with both nutritional benefits and protection against pathogen invasion of the surrounding endosperm. This Zea mays (Maize) protein is Ribosome-inactivating protein 3 (CRIP3).